A 440-amino-acid polypeptide reads, in one-letter code: NK1 transcription factor-related protein 1 (440 aa).

Over residues 1-13 the composition is skewed to low complexity; the sequence is MSTSGPAAPGDVP. Disordered regions lie at residues 1–82, 145–291, and 342–387; these read MSTS…RPTS, GVAA…PRRA, and KWKK…PMGA. Positions 14–31 are enriched in pro residues; that stretch reads ALPPPPPGPGSGPAPPAP. Low complexity-rich tracts occupy residues 62-74 and 145-158; these read VPAV…AARP and GVAA…TSAG. The span at 170 to 181 shows a compositional bias: polar residues; that stretch reads GYSSGSGRSPTA. A compositionally biased stretch (acidic residues) spans 182-198; sequence DSEDEAPEDEDEEEAPE. Residues 210–222 show a composition bias toward gly residues; it reads GGSGGLGARGSGC. Residues 237–269 are compositionally biased toward low complexity; sequence AAPGPRGNSPGAPGPPATATGAGSAGSTPQGAA. Positions 288–347 form a DNA-binding region, homeobox; it reads PRRARTAFTYEQLVALENKFKATRYLSVCERLNLALSLSLTETQVKIWFQNRRTKWKKQN. Residues 356-374 are compositionally biased toward gly residues; that stretch reads TGGGGGPGPGAGPGAGLPG.

It belongs to the NK-1 homeobox family.

Its subcellular location is the nucleus. Functionally, may be required for the coordinated crosstalk of factors involved in the maintenance of energy homeostasis, possibly by regulating the transcription of specific factors involved in energy balance. This chain is NK1 transcription factor-related protein 1, found in Mus musculus (Mouse).